Consider the following 383-residue polypeptide: Paralemmin-1 (383 aa).

Met-1 bears the N-acetylmethionine mark. A coiled-coil region spans residues 7–101 (DTVSQQERLQ…EKEIDVLEFG (95 aa)). 3 disordered regions span residues 51–164 (RERW…STMM), 242–293 (TLSE…QPGQ), and 333–374 (SVTP…DMKK). Basic and acidic residues predominate over residues 69–96 (DMRKQMQEDEQKARSLEESITRLEKEID). Phosphoserine is present on residues Ser-116, Ser-122, and Ser-124. The segment covering 133-143 (ETMVNAQQTPL) has biased composition (polar residues). Phosphothreonine is present on residues Thr-141, Thr-145, and Thr-153. A phosphoserine mark is found at Ser-157 and Ser-161. Thr-242 is subject to Phosphothreonine. Position 244 is a phosphoserine (Ser-244). Over residues 257–273 (GLAEDVTRTTPSRREIT) the composition is skewed to basic and acidic residues. At Ser-345 the chain carries Phosphoserine. A compositionally biased stretch (polar residues) spans 357-367 (QTGPTTTPSDT). Phosphothreonine is present on residues Thr-361, Thr-362, and Thr-363. The residue at position 365 (Ser-365) is a Phosphoserine. Thr-367 is modified (phosphothreonine). 2 S-palmitoyl cysteine lipidation sites follow: Cys-377 and Cys-379. A Cysteine methyl ester modification is found at Cys-380. Cys-380 carries the S-farnesyl cysteine lipid modification. The propeptide at 381-383 (SVM) is removed in mature form.

This sequence belongs to the paralemmin family. In terms of assembly, interacts with dopamine receptor DRD3. As to expression, expressed in neurons cells of neuropil-rich areas of the brain, in the Purkinje cells of the cerebellum, in cells of the cerebral cortex, hippocampus, brainstem nuclei and glial processes and sheaths. Expressed in the medulla of the adrenal chromaffin cells and renal duct cells (at protein level).

Its subcellular location is the cell membrane. The protein resides in the cell projection. The protein localises to the filopodium membrane. It is found in the axon. It localises to the dendrite. Its subcellular location is the dendritic spine. The protein resides in the basolateral cell membrane. The protein localises to the apicolateral cell membrane. In terms of biological role, involved in plasma membrane dynamics and cell process formation. Necessary for axonal and dendritic filopodia induction, for dendritic spine maturation and synapse formation in a palmitoylation-dependent manner. The sequence is that of Paralemmin-1 (Palm) from Rattus norvegicus (Rat).